Consider the following 724-residue polypeptide: Cyclin-T1 (724 aa).

Phosphoserine is present on S117. The short motif at 253-270 (KRIRNWRAYQAAMKTKPD) is the Nuclear localization signal element. Residue K342 forms a Glycyl lysine isopeptide (Lys-Gly) (interchain with G-Cter in SUMO2) linkage. The stretch at 384–425 (SAKVSLKEYRAKHAEELAAQKRQLENMEANVKSQYAYAAQNL) forms a coiled coil. Phosphoserine is present on S388. At K390 the chain carries N6-acetyllysine. Residue K415 forms a Glycyl lysine isopeptide (Lys-Gly) (interchain with G-Cter in SUMO2) linkage. ADP-ribosylserine is present on residues S416, S473, and S474. Residues 479–549 (IKMRIKVHSA…RPSDPKHSSQ (71 aa)) form a histidine-rich domain (HRD) region. K480 is covalently cross-linked (Glycyl lysine isopeptide (Lys-Gly) (interchain with G-Cter in SUMO2)). The segment covering 483 to 507 (IKVHSAGDKHNSIEDSVTKSREHKE) has biased composition (basic and acidic residues). Disordered regions lie at residues 483-586 (IKVH…VFDH) and 691-724 (PRAG…PLPK). K484 is modified (N6-(ADP-ribosyl)lysine). Residue H486 is modified to ADP-ribosylhistidine. Phosphoserine occurs at positions 494 and 498. Positions 508–529 (KQRTHPSNHHHHHNHHSHRHSH) are enriched in basic residues. The residue at position 529 (H529) is an ADP-ribosylhistidine. ADP-ribosylserine occurs at positions 548 and 551. ADP-ribosylhistidine is present on H555. Low complexity predominate over residues 559 to 569 (SLSSTLSSSSS). The residue at position 562 (S562) is an ADP-ribosylserine. Over residues 708–724 (PPPLPSEPPPPLPPLPK) the composition is skewed to pro residues.

The protein belongs to the cyclin family. Cyclin C subfamily. Cyclin-T1 is the predominant cyclin that associates with CDK9 to form a heterodimer called P-TEFb. P-TEFb forms a complex with AFF4/AF5Q31. Component of a complex which is at least composed of HTATSF1/Tat-SF1, P-TEFb complex, RNA pol II, SUPT5H, and NCL/nucleolin. Component of the 7SK snRNP complex at least composed of P-TEFb (composed of CDK9 and CCNT1/cyclin-T1), HEXIM1, HEXIM2, BCDIN3, SART3 proteins and 7SK and U6 snRNAs. Interacts (via central region) with ZMYND8 (via N-terminus); the interaction is direct and the association appears to occur between homodimeric ZMYND8 and the activated form of the P-TEFb complex. Interacts with BRD4, targets chromatin binding. Interacts with JMJD6. Interacts with MDFIC. Interacts with HSF1. Interacts with HTATSF1. Interacts with TBX21. Post-translationally, ADP-ribosylation on serine residues by PARP1 in response to DNA damage disrupts the phase separation activity of CCNT1, thereby preventing activation of CDK9.

Its subcellular location is the nucleus. In terms of biological role, regulatory subunit of the cyclin-dependent kinase pair (CDK9/cyclin-T1) complex, also called positive transcription elongation factor B (P-TEFb), which facilitates the transition from abortive to productive elongation by phosphorylating the CTD (C-terminal domain) of the large subunit of RNA polymerase II (RNA Pol II). Required to activate the protein kinase activity of CDK9: acts by mediating formation of liquid-liquid phase separation (LLPS) that enhances binding of P-TEFb to the CTD of RNA Pol II. The protein is Cyclin-T1 (Ccnt1) of Mus musculus (Mouse).